Consider the following 818-residue polypeptide: Dapper 1-A (818 aa).

Pro residues predominate over residues 1-10 (MKPIPSPEPP). Disordered stretches follow at residues 1-30 (MKPI…WERH), 60-80 (VLSP…PRSD), 122-144 (IDSE…LSDG), 455-486 (NVTP…SALL), and 510-530 (ESSS…SSSQ). Residues 1-337 (MKPIPSPEPP…PVRTNKPRTS (337 aa)) are interaction with tcf7l1-A. Over residues 21–30 (DKGEAEWERH) the composition is skewed to basic and acidic residues. A coiled-coil region spans residues 79 to 130 (SDEQKLLEENISLLKKQLNCLRKRDAGLLSQLHELDKQINDLKIDSEKTEET). A compositionally biased stretch (basic and acidic residues) spans 122-132 (IDSEKTEETDS). A compositionally biased stretch (polar residues) spans 455 to 485 (NVTPNAPANLPNASSSVCNGSPRESTQNSAL). Over residues 512–524 (SSFEERPPLDFKS) the composition is skewed to basic and acidic residues. A PDZ-binding motif is present at residues 815–818 (MTTV).

Belongs to the dapper family. As to quaternary structure, interacts with dbf4 and tcf7l1-A. Interacts with dvl2/dsh via the C-terminus. Expressed in the animal and dorsal marginal regions at late blastula and early gastrula stages. Expressed predominantly in the anterior neural plate at neurulation. Expressed mainly in the ectodermal placodes, including the eye anlagen and the otic vesicle, at later stages of development.

Its subcellular location is the cytoplasm. The protein localises to the nucleus. In terms of biological role, involved in regulation of intracellular signaling pathways during development. Specifically thought to play a role in canonical and/or non-canonical Wnt signaling pathways through interaction with DSH (Dishevelled) family proteins. Binds to dvl2/dsh and impedes the degradation of beta-catenin (ctnnb1-A and possibly ctnnb1-B), thereby enhancing the transcriptional activation of target genes of the Wnt signaling pathway. Also promotes catenin delta/ctnnd1 stability which in turn promotes zbtb33/kaiso sequestration and thus is involved in the regulation of zbtb33/kaiso-mediated transcriptional repression. May also bind to and directly stimulate the transcriptional activity of tcf7l1-A. Required for eye development and neural patterning. This is Dapper 1-A (dact1-a) from Xenopus laevis (African clawed frog).